The sequence spans 331 residues: Aspartate carbamoyltransferase catalytic subunit (331 aa).

Positions 66 and 67 each coordinate carbamoyl phosphate. An L-aspartate-binding site is contributed by lysine 94. Carbamoyl phosphate contacts are provided by arginine 116, histidine 149, and glutamine 152. Residues arginine 189 and arginine 243 each coordinate L-aspartate. Residues glycine 284 and proline 285 each coordinate carbamoyl phosphate.

The protein belongs to the aspartate/ornithine carbamoyltransferase superfamily. ATCase family. In terms of assembly, heterododecamer (2C3:3R2) of six catalytic PyrB chains organized as two trimers (C3), and six regulatory PyrI chains organized as three dimers (R2).

It carries out the reaction carbamoyl phosphate + L-aspartate = N-carbamoyl-L-aspartate + phosphate + H(+). The protein operates within pyrimidine metabolism; UMP biosynthesis via de novo pathway; (S)-dihydroorotate from bicarbonate: step 2/3. Functionally, catalyzes the condensation of carbamoyl phosphate and aspartate to form carbamoyl aspartate and inorganic phosphate, the committed step in the de novo pyrimidine nucleotide biosynthesis pathway. This Thermosynechococcus vestitus (strain NIES-2133 / IAM M-273 / BP-1) protein is Aspartate carbamoyltransferase catalytic subunit.